We begin with the raw amino-acid sequence, 459 residues long: Nuclear distribution protein PAC1-2 (459 aa).

The stretch at 56–83 forms a coiled coil; that stretch reads TSIVRLQKKIMDLESRNAALQTELANLT. 8 WD repeats span residues 108–149, 151–191, 195–244, 246–284, 306–348, 350–389, 394–438, and 440–459; these read SHRD…RTVK, HTRA…KNIR, GHDH…KTLR, HTAW…SDHK, QYLA…LGTL, GHDN…KCVK, AHER…DTPD, and QVRC…VFAD.

The protein belongs to the WD repeat LIS1/nudF family. As to quaternary structure, self-associates. Interacts with NDL1 and dynein.

The protein resides in the cytoplasm. It localises to the cytoskeleton. The protein localises to the spindle pole. Positively regulates the activity of the minus-end directed microtubule motor protein dynein. May enhance dynein-mediated microtubule sliding by targeting dynein to the microtubule plus end. Required for nuclear migration during vegetative growth as well as development. Required for retrograde early endosome (EE) transport from the hyphal tip. Required for localization of dynein to the mitotic spindle poles. Recruits additional proteins to the dynein complex at SPBs. The sequence is that of Nuclear distribution protein PAC1-2 from Uncinocarpus reesii (strain UAMH 1704).